A 70-amino-acid chain; its full sequence is Guanine nucleotide-binding protein G(I)/G(S)/G(O) subunit gamma-8 (70 aa).

A Cysteine methyl ester modification is found at C67. Residue C67 is the site of S-geranylgeranyl cysteine attachment. The propeptide at 68–70 (VLL) is removed in mature form.

Belongs to the G protein gamma family. In terms of assembly, g proteins are composed of 3 units, alpha, beta and gamma.

Its subcellular location is the cell membrane. Guanine nucleotide-binding proteins (G proteins) are involved as a modulator or transducer in various transmembrane signaling systems. The beta and gamma chains are required for the GTPase activity, for replacement of GDP by GTP, and for G protein-effector interaction. This Homo sapiens (Human) protein is Guanine nucleotide-binding protein G(I)/G(S)/G(O) subunit gamma-8 (GNG8).